Here is a 950-residue protein sequence, read N- to C-terminus: Protocadherin alpha-8 (950 aa).

The N-terminal stretch at 1 to 29 (MVYHWRGDLGSWRLLLLLLLLAAWKVGSG) is a signal peptide. 6 consecutive Cadherin domains span residues 30–133 (QLHY…PPVF), 157–242 (ASDA…APNF), 243–350 (EQSE…VPEI), 351–455 (ALTS…APAF), 456–565 (AQPE…APAL), and 581–678 (VPRS…APKA). The Extracellular segment spans residues 30-697 (QLHYSVPEEA…GPEAALVDVN (668 aa)). N-linked (GlcNAc...) asparagine glycans are attached at residues Asn257 and Asn265. Asn548 is a glycosylation site (N-linked (GlcNAc...) asparagine). Residues 698 to 718 (VYLIIAICAVSSLLVLTLLLY) traverse the membrane as a helical segment. Over 719-950 (TALRCSALPT…GNSTTDNSDQ (232 aa)) the chain is Cytoplasmic. PXXP repeat units follow at residues 774 to 777 (PCLP), 799 to 802 (PRQP), 832 to 835 (PGGP), 873 to 876 (PGNP), and 891 to 894 (PGSP). The tract at residues 774–894 (PCLPPDLGSV…PDKFIIPGSP (121 aa)) is 5 X 4 AA repeats of P-X-X-P. A disordered region spans residues 831–950 (GPGGPDQQWP…GNSTTDNSDQ (120 aa)). The span at 909-923 (DKSDFITFGKKEETK) shows a compositional bias: basic and acidic residues.

It is found in the cell membrane. Its function is as follows. Potential calcium-dependent cell-adhesion protein. May be involved in the establishment and maintenance of specific neuronal connections in the brain. The polypeptide is Protocadherin alpha-8 (PCDHA8) (Pan troglodytes (Chimpanzee)).